Reading from the N-terminus, the 370-residue chain is Small ribosomal subunit biogenesis GTPase RsgA (370 aa).

The CP-type G domain occupies 111–270; sequence RSEGQILAAN…LIDTPGLRGV (160 aa). GTP is bound by residues 158–161 and 212–220; these read TKAD and GQSGAGKST. Zn(2+) contacts are provided by Cys293, Cys298, His300, and Cys306.

The protein belongs to the TRAFAC class YlqF/YawG GTPase family. RsgA subfamily. As to quaternary structure, monomer. Associates with 30S ribosomal subunit, binds 16S rRNA. The cofactor is Zn(2+).

It localises to the cytoplasm. One of several proteins that assist in the late maturation steps of the functional core of the 30S ribosomal subunit. Helps release RbfA from mature subunits. May play a role in the assembly of ribosomal proteins into the subunit. Circularly permuted GTPase that catalyzes slow GTP hydrolysis, GTPase activity is stimulated by the 30S ribosomal subunit. This chain is Small ribosomal subunit biogenesis GTPase RsgA, found in Streptomyces avermitilis (strain ATCC 31267 / DSM 46492 / JCM 5070 / NBRC 14893 / NCIMB 12804 / NRRL 8165 / MA-4680).